Here is a 427-residue protein sequence, read N- to C-terminus: Indole diterpene prenyltransferase ptmD (427 aa).

Residue 77–78 (YV) participates in L-tryptophan binding. 9 residues coordinate substrate: R99, K186, Y188, R259, K261, Y263, Y344, Y409, and Y413.

Belongs to the tryptophan dimethylallyltransferase family.

Its pathway is secondary metabolite biosynthesis. Functionally, indole diterpene prenyltransferase; part of the gene cluster that mediates the biosynthesis of the indole diterpenes penitrems. The geranylgeranyl diphosphate (GGPP) synthase ptmG catalyzes the first step in penitrem biosynthesis via conversion of farnesyl pyrophosphate and isopentyl pyrophosphate into geranylgeranyl pyrophosphate (GGPP). Condensation of indole-3-glycerol phosphate with GGPP by the prenyl transferase ptmC then forms 3-geranylgeranylindole (3-GGI). Epoxidation by the FAD-dependent monooxygenase ptmM leads to a epoxidized-GGI that is substrate of the terpene cyclase ptmB for cyclization to yield paspaline. Paspaline is subsequently converted to 13-desoxypaxilline by the cytochrome P450 monooxygenase ptmP, the latter being then converted to paxilline by the cytochrome P450 monooxygenase ptmQ. Paxilline is converted to beta-paxitriol via C-10 ketoreduction by the short-chain dehydrogenase ptmH which can be monoprenylated at the C-20 by the indole diterpene prenyltransferase ptmD. A two-step elimination (acetylation and elimination) process performed by the O-acetyltransferase ptmV and ptmI leads to the production of the prenylated form of penijanthine. The FAD-linked oxidoreductase ptmO then converts the prenylated form of penijanthine into PC-M5 which is in turn transformed into PC-M4 by the aromatic dimethylallyltransferase ptmE. Five sequential oxidative transformations performed by the cytochrome P450 monooxygenases ptmK, ptmU, ptmL, ptmN and ptmJ yield the various penitrem compounds. PtmK, ptmU and ptmM are involved in the formation of the key bicyclic ring of penitrem C via the formation of the intermediates secopenitrem D and penitrem D. PtmL catalyzes the epoxidation of penitrem D and C to yield penitrem B and F, respectively. PtmJ catalyzes the last benzylic hydroxylation to convert penitrem B to prenitrem E and penitrem F to penitrem A. In Penicillium ochrochloron, this protein is Indole diterpene prenyltransferase ptmD.